Here is a 539-residue protein sequence, read N- to C-terminus: Lysosomal cobalamin transport escort protein LMBD1 (539 aa).

Residues 1–7 are Extracellular-facing; it reads MATGSTE. A helical membrane pass occupies residues 8–28; it reads LLIGWCIFGVLLLAILAFCWV. Over 29-47 the chain is Cytoplasmic; the sequence is YVRKYQSHQESEVISTITA. A helical membrane pass occupies residues 48–68; sequence ISSLAIALITSALLPVDIFLV. The Extracellular portion of the chain corresponds to 69-98; sequence SFMKNHNGTFKDWAESNTTRLQIENTVLIG. N-linked (GlcNAc...) asparagine glycosylation is found at asparagine 75 and asparagine 85. The helical transmembrane segment at 99–119 threads the bilayer; it reads YYTLYSIILFCVFLWIPFVYF. The Cytoplasmic segment spans residues 120–142; it reads YYEEKDDTDGSQCSQIANAFKYT. Residues 143–163 form a helical membrane-spanning segment; the sequence is SGFILVCSCLLLIGAFAPLDI. The Extracellular portion of the chain corresponds to 164-186; sequence HTNKNSTDLDKIKLLFLELGSSN. Asparagine 168 carries N-linked (GlcNAc...) asparagine glycosylation. A helical membrane pass occupies residues 187–207; that stretch reads GLAALSFSISSLTLIGMLAAI. The Cytoplasmic segment spans residues 208 to 303; it reads TYTAYGMSAL…KCCIVIRPFK (96 aa). Residues 304 to 324 traverse the membrane as a helical segment; the sequence is IIWGILFILVALLFIVSLFLS. The Extracellular segment spans residues 325 to 362; the sequence is NLDKALHSAGIDSGFIIFGTNLTNPLNMLLPVLQTVFP. Asparagine 345 carries N-linked (GlcNAc...) asparagine glycosylation. Residues 363–383 form a helical membrane-spanning segment; that stretch reads LDYIFITIITMYFIFTSMAGI. Topologically, residues 384–406 are cytoplasmic; that stretch reads RNMGIWFFWIRLYKIRRRRTRPQ. The chain crosses the membrane as a helical span at residues 407 to 427; it reads ALLFLCMILLLIVLHTSYMIY. At 428–484 the chain is on the extracellular side; it reads SLAPQYVMYGSQKYLWENNSTQETAIGNSSASVLKDCDASAPEDQCTVTRTYLFLHK. N-linked (GlcNAc...) asparagine glycans are attached at residues asparagine 445, asparagine 446, and asparagine 455. A helical transmembrane segment spans residues 485–505; it reads FWFFSSIYYFGNWAFIVVFVI. Topologically, residues 506–539 are cytoplasmic; that stretch reads GLIVSCCKGKKSVIEGEVEDDDSDLSDDEEHPYA.

The protein belongs to the LIMR family. LMBRD1 subfamily.

The protein localises to the endoplasmic reticulum membrane. It is found in the lysosome membrane. The protein resides in the cell membrane. Functionally, lysosomal membrane chaperone required to export cobalamin (vitamin B12) from the lysosome to the cytosol, allowing its conversion to cofactors. Targets ABCD4 transporter from the endoplasmic reticulum to the lysosome. Then forms a complex with lysosomal ABCD4 and cytoplasmic MMACHC to transport cobalamin across the lysosomal membrane. May play a role in mediating and regulating the internalization of the insulin receptor. This Xenopus tropicalis (Western clawed frog) protein is Lysosomal cobalamin transport escort protein LMBD1 (lmbrd1).